Reading from the N-terminus, the 405-residue chain is GTPase Obg (405 aa).

The region spanning 1-159 is the Obg domain; the sequence is MRFIDEAVVT…KVLKFELKVV (159 aa). Residues 160–333 form the OBG-type G domain; the sequence is ADVGLIGLPN…IKYHLMNEIE (174 aa). Residues 166–173, 191–195, 213–216, 283–286, and 314–316 contribute to the GTP site; these read GLPNAGKS, FTTLV, DIPG, NKID, and ATL. Residues Ser-173 and Thr-193 each coordinate Mg(2+). The segment covering 371–382 has biased composition (basic and acidic residues); it reads YRAARKAAREGT. Residues 371–405 form a disordered region; that stretch reads YRAARKAAREGTDLSDDDFDGSDDDDDGVEVIYAP. The span at 383–399 shows a compositional bias: acidic residues; the sequence is DLSDDDFDGSDDDDDGV.

The protein belongs to the TRAFAC class OBG-HflX-like GTPase superfamily. OBG GTPase family. In terms of assembly, monomer. Requires Mg(2+) as cofactor.

It localises to the cytoplasm. Its function is as follows. An essential GTPase which binds GTP, GDP and possibly (p)ppGpp with moderate affinity, with high nucleotide exchange rates and a fairly low GTP hydrolysis rate. Plays a role in control of the cell cycle, stress response, ribosome biogenesis and in those bacteria that undergo differentiation, in morphogenesis control. In Psychrobacter arcticus (strain DSM 17307 / VKM B-2377 / 273-4), this protein is GTPase Obg.